A 317-amino-acid chain; its full sequence is tRNA pseudouridine synthase B (317 aa).

The Nucleophile role is filled by aspartate 47.

This sequence belongs to the pseudouridine synthase TruB family. Type 1 subfamily.

It catalyses the reaction uridine(55) in tRNA = pseudouridine(55) in tRNA. In terms of biological role, responsible for synthesis of pseudouridine from uracil-55 in the psi GC loop of transfer RNAs. In Vibrio atlanticus (strain LGP32) (Vibrio splendidus (strain Mel32)), this protein is tRNA pseudouridine synthase B.